A 539-amino-acid chain; its full sequence is CTP synthase (539 aa).

Positions 1–267 (MTKYIFVTGG…DQKVCDFLHL (267 aa)) are amidoligase domain. Position 13 (S13) interacts with CTP. S13 is a binding site for UTP. An ATP-binding site is contributed by 14 to 19 (SLGKGI). Y54 contributes to the L-glutamine binding site. D71 lines the ATP pocket. The Mg(2+) site is built by D71 and E141. CTP-binding positions include 148–150 (DIE), 188–193 (KTKPTQ), and K224. Residues 188-193 (KTKPTQ) and K224 each bind UTP. Residues 294 to 537 (KITLVGKYVE…IGAASGLPAQ (244 aa)) form the Glutamine amidotransferase type-1 domain. L-glutamine is bound at residue G356. Catalysis depends on C383, which acts as the Nucleophile; for glutamine hydrolysis. Residues 384–387 (LGMQ), E407, and R465 each bind L-glutamine. Catalysis depends on residues H510 and E512.

It belongs to the CTP synthase family. Homotetramer.

It catalyses the reaction UTP + L-glutamine + ATP + H2O = CTP + L-glutamate + ADP + phosphate + 2 H(+). The enzyme catalyses L-glutamine + H2O = L-glutamate + NH4(+). It carries out the reaction UTP + NH4(+) + ATP = CTP + ADP + phosphate + 2 H(+). Its pathway is pyrimidine metabolism; CTP biosynthesis via de novo pathway; CTP from UDP: step 2/2. With respect to regulation, allosterically activated by GTP, when glutamine is the substrate; GTP has no effect on the reaction when ammonia is the substrate. The allosteric effector GTP functions by stabilizing the protein conformation that binds the tetrahedral intermediate(s) formed during glutamine hydrolysis. Inhibited by the product CTP, via allosteric rather than competitive inhibition. Its function is as follows. Catalyzes the ATP-dependent amination of UTP to CTP with either L-glutamine or ammonia as the source of nitrogen. Regulates intracellular CTP levels through interactions with the four ribonucleotide triphosphates. This is CTP synthase from Lactobacillus acidophilus (strain ATCC 700396 / NCK56 / N2 / NCFM).